A 395-amino-acid polypeptide reads, in one-letter code: Acetate kinase (395 aa).

Asn-8 is a binding site for Mg(2+). Residue Lys-15 coordinates ATP. Arg-89 is a substrate binding site. Asp-146 (proton donor/acceptor) is an active-site residue. ATP contacts are provided by residues His-206–Gly-210, Asp-281–Arg-283, and Gly-329–Asn-333. Residue Glu-382 coordinates Mg(2+).

The protein belongs to the acetokinase family. Homodimer. Mg(2+) serves as cofactor. It depends on Mn(2+) as a cofactor.

The protein localises to the cytoplasm. The enzyme catalyses acetate + ATP = acetyl phosphate + ADP. It functions in the pathway metabolic intermediate biosynthesis; acetyl-CoA biosynthesis; acetyl-CoA from acetate: step 1/2. Its function is as follows. Catalyzes the formation of acetyl phosphate from acetate and ATP. Can also catalyze the reverse reaction. This chain is Acetate kinase, found in Bacillus velezensis (strain DSM 23117 / BGSC 10A6 / LMG 26770 / FZB42) (Bacillus amyloliquefaciens subsp. plantarum).